Here is a 205-residue protein sequence, read N- to C-terminus: Small ribosomal subunit protein uS4 (205 aa).

Positions 18 to 49 (NIWGRPKSPVNKREYGPGQHGQRRKGKLSDFG) are disordered. The 64-residue stretch at 94–157 (RRLDAIVYRA…KQLALVLEAN (64 aa)) folds into the S4 RNA-binding domain.

Belongs to the universal ribosomal protein uS4 family. Part of the 30S ribosomal subunit. Contacts protein S5. The interaction surface between S4 and S5 is involved in control of translational fidelity.

Its function is as follows. One of the primary rRNA binding proteins, it binds directly to 16S rRNA where it nucleates assembly of the body of the 30S subunit. In terms of biological role, with S5 and S12 plays an important role in translational accuracy. The sequence is that of Small ribosomal subunit protein uS4 from Afipia carboxidovorans (strain ATCC 49405 / DSM 1227 / KCTC 32145 / OM5) (Oligotropha carboxidovorans).